A 199-amino-acid chain; its full sequence is Charged multivesicular body protein 1b (199 aa).

Residues 26-48 (DKEEKAEKAKIKKAIQKGNMEVA) are a coiled coil. The segment at 132–156 (MEDTMSSTTTLTTPQNQVDMLLQEM) is interaction with IST1. A disordered region spans residues 167–199 (ELPQGQTGSVGTSVASAEQDELSQRLARLRDQV). Positions 170 to 182 (QGQTGSVGTSVAS) are enriched in polar residues. The tract at residues 174–199 (GSVGTSVASAEQDELSQRLARLRDQV) is interaction with SPAST. Residues 178–199 (TSVASAEQDELSQRLARLRDQV) adopt a coiled-coil conformation. Positions 180–196 (VASAEQDELSQRLARLR) are interaction with VPS4A, MITD1 and STAMBP. The interaction with VTA1 stretch occupies residues 180-199 (VASAEQDELSQRLARLRDQV). An interaction with VPS4B region spans residues 183-199 (AEQDELSQRLARLRDQV). The short motif at 186–196 (DELSQRLARLR) is the MIT-interacting motif element.

The protein belongs to the SNF7 family. As to quaternary structure, probable peripherally associated component of the endosomal sorting required for transport complex III (ESCRT-III). ESCRT-III components are thought to multimerize to form a flat lattice on the perimeter membrane of the endosome. Several assembly forms of ESCRT-III may exist that interact and act sequentially. Interacts with CHMP1A. Interacts with VTA1; the interaction probably involves the open conformation of CHMP1B. Interacts with CHMP2A. Interacts with VPS4A; the interaction is direct. Interacts with VPS4B; the interaction is direct. Interacts with SPAST (via MIT domain); the interaction is direct. Interacts with IST1. Interacts with MITD1. Interacts with STAMBP. In terms of tissue distribution, widely expressed. Expressed in pancreas, kidney, skeletal muscle, liver, lung, placenta and brain.

It localises to the cytoplasm. The protein resides in the cytosol. Its subcellular location is the endosome. It is found in the late endosome membrane. In terms of biological role, probable peripherally associated component of the endosomal sorting required for transport complex III (ESCRT-III) which is involved in multivesicular bodies (MVBs) formation and sorting of endosomal cargo proteins into MVBs. MVBs contain intraluminal vesicles (ILVs) that are generated by invagination and scission from the limiting membrane of the endosome and mostly are delivered to lysosomes enabling degradation of membrane proteins, such as stimulated growth factor receptors, lysosomal enzymes and lipids. The MVB pathway appears to require the sequential function of ESCRT-O, -I,-II and -III complexes. ESCRT-III proteins mostly dissociate from the invaginating membrane before the ILV is released. The ESCRT machinery also functions in topologically equivalent membrane fission events, such as the terminal stages of cytokinesis and the budding of enveloped viruses (HIV-1 and other lentiviruses). ESCRT-III proteins are believed to mediate the necessary vesicle extrusion and/or membrane fission activities, possibly in conjunction with the AAA ATPase VPS4. Involved in cytokinesis. Involved in recruiting VPS4A and/or VPS4B and SPAST to the midbody of dividing cells. Involved in HIV-1 p6- and p9-dependent virus release. This Homo sapiens (Human) protein is Charged multivesicular body protein 1b (CHMP1B).